Here is a 436-residue protein sequence, read N- to C-terminus: Gamma-glutamyl phosphate reductase (436 aa).

The protein belongs to the gamma-glutamyl phosphate reductase family.

The protein resides in the cytoplasm. It catalyses the reaction L-glutamate 5-semialdehyde + phosphate + NADP(+) = L-glutamyl 5-phosphate + NADPH + H(+). It functions in the pathway amino-acid biosynthesis; L-proline biosynthesis; L-glutamate 5-semialdehyde from L-glutamate: step 2/2. Functionally, catalyzes the NADPH-dependent reduction of L-glutamate 5-phosphate into L-glutamate 5-semialdehyde and phosphate. The product spontaneously undergoes cyclization to form 1-pyrroline-5-carboxylate. In Prochlorococcus marinus (strain MIT 9301), this protein is Gamma-glutamyl phosphate reductase.